The chain runs to 457 residues: Serine--tRNA ligase (457 aa).

252–254 (TAE) contacts L-serine. Residues 283 to 285 (RKE) and valine 299 contribute to the ATP site. Glutamate 306 lines the L-serine pocket. 370–373 (EMVS) serves as a coordination point for ATP. Threonine 406 provides a ligand contact to L-serine.

This sequence belongs to the class-II aminoacyl-tRNA synthetase family. Type-1 seryl-tRNA synthetase subfamily. Homodimer. The tRNA molecule binds across the dimer.

It localises to the cytoplasm. It carries out the reaction tRNA(Ser) + L-serine + ATP = L-seryl-tRNA(Ser) + AMP + diphosphate + H(+). The enzyme catalyses tRNA(Sec) + L-serine + ATP = L-seryl-tRNA(Sec) + AMP + diphosphate + H(+). It participates in aminoacyl-tRNA biosynthesis; selenocysteinyl-tRNA(Sec) biosynthesis; L-seryl-tRNA(Sec) from L-serine and tRNA(Sec): step 1/1. Its function is as follows. Catalyzes the attachment of serine to tRNA(Ser). Is also able to aminoacylate tRNA(Sec) with serine, to form the misacylated tRNA L-seryl-tRNA(Sec), which will be further converted into selenocysteinyl-tRNA(Sec). This is Serine--tRNA ligase from Saccharolobus islandicus (strain Y.N.15.51 / Yellowstone #2) (Sulfolobus islandicus).